Here is a 141-residue protein sequence, read N- to C-terminus: Nucleoside diphosphate kinase (141 aa).

ATP is bound by residues Lys11, Phe59, Arg87, Thr93, Arg104, and Asn114. The active-site Pros-phosphohistidine intermediate is the His117.

The protein belongs to the NDK family. In terms of assembly, homotetramer. Mg(2+) serves as cofactor.

Its subcellular location is the cytoplasm. The catalysed reaction is a 2'-deoxyribonucleoside 5'-diphosphate + ATP = a 2'-deoxyribonucleoside 5'-triphosphate + ADP. It catalyses the reaction a ribonucleoside 5'-diphosphate + ATP = a ribonucleoside 5'-triphosphate + ADP. Functionally, major role in the synthesis of nucleoside triphosphates other than ATP. The ATP gamma phosphate is transferred to the NDP beta phosphate via a ping-pong mechanism, using a phosphorylated active-site intermediate. In Burkholderia ambifaria (strain MC40-6), this protein is Nucleoside diphosphate kinase.